The primary structure comprises 769 residues: Probable protease Ga0334635_1659 (769 aa).

Residues 118 to 167 (VARGSSDNNGAPPLSFTLSHGDPKSDPEPSSPSRLVNTGLSEAERPESPL) are disordered.

Its function is as follows. Probably a dedicated protease for substrate gasdermin bGSDM; cleaves the bGSDM precursor, releasing the pore-forming moiety, which integrates into the membrane and triggers cell death. Involved in defense against bacteriophages. Expression of gasdermin bGSDM and this neighboring protease is toxic in E.coli. The protein is Probable protease Ga0334635_1659 of Vitiosangium sp. (strain GDMCC 1.1324).